A 97-amino-acid polypeptide reads, in one-letter code: uncharacterized protein (97 aa).

This is an uncharacterized protein from Sulfolobus islandicus filamentous virus (isolate Iceland/Hveragerdi) (SIFV).